We begin with the raw amino-acid sequence, 474 residues long: Synaptotagmin-15B (474 aa).

Disordered regions lie at residues 1 to 62 (MGVV…AASG) and 75 to 128 (PRAA…PPAV). Positions 75–88 (PRAAAGHQQHHGPP) are enriched in low complexity. 2 consecutive C2 domains span residues 200-317 (CLGR…RRVI) and 331-452 (EFGD…EHWD).

This sequence belongs to the synaptotagmin family.

The sequence is that of Synaptotagmin-15B from Homo sapiens (Human).